Consider the following 195-residue polypeptide: MRVAEVTRNTSETQIRVSLNLDGTGRQKLASGVPFLDHMLDQIARHGMFDLEVEATGDTHIDDHHTVEDVGITLGQAVAKAIGDKKGITRYGHSYVPLDECLSRVVIDFSGRPGLEFHVPFTRARVGSFDVDLTIEFFRGFVNHAGVTLHIDNLRGINAHHQCETVFKAFGRALRMAVELDPRAANTIPSTKGTL.

The protein belongs to the imidazoleglycerol-phosphate dehydratase family.

It localises to the cytoplasm. The enzyme catalyses D-erythro-1-(imidazol-4-yl)glycerol 3-phosphate = 3-(imidazol-4-yl)-2-oxopropyl phosphate + H2O. It functions in the pathway amino-acid biosynthesis; L-histidine biosynthesis; L-histidine from 5-phospho-alpha-D-ribose 1-diphosphate: step 6/9. The polypeptide is Imidazoleglycerol-phosphate dehydratase (Cupriavidus pinatubonensis (strain JMP 134 / LMG 1197) (Cupriavidus necator (strain JMP 134))).